The following is a 479-amino-acid chain: Proline--tRNA ligase (479 aa).

Belongs to the class-II aminoacyl-tRNA synthetase family. ProS type 3 subfamily. As to quaternary structure, homodimer.

Its subcellular location is the cytoplasm. The enzyme catalyses tRNA(Pro) + L-proline + ATP = L-prolyl-tRNA(Pro) + AMP + diphosphate. Its function is as follows. Catalyzes the attachment of proline to tRNA(Pro) in a two-step reaction: proline is first activated by ATP to form Pro-AMP and then transferred to the acceptor end of tRNA(Pro). This is Proline--tRNA ligase from Lachnospira eligens (strain ATCC 27750 / DSM 3376 / VPI C15-48 / C15-B4) (Eubacterium eligens).